A 683-amino-acid chain; its full sequence is DNA ligase (683 aa).

Residues D36–D40, S85–L86, and E121 each bind NAD(+). K123 acts as the N6-AMP-lysine intermediate in catalysis. The NAD(+) site is built by R144, E180, K296, and K320. Zn(2+) is bound by residues C413, C416, C431, and C437. The region spanning P605–L683 is the BRCT domain.

The protein belongs to the NAD-dependent DNA ligase family. LigA subfamily. Requires Mg(2+) as cofactor. Mn(2+) serves as cofactor.

It catalyses the reaction NAD(+) + (deoxyribonucleotide)n-3'-hydroxyl + 5'-phospho-(deoxyribonucleotide)m = (deoxyribonucleotide)n+m + AMP + beta-nicotinamide D-nucleotide.. In terms of biological role, DNA ligase that catalyzes the formation of phosphodiester linkages between 5'-phosphoryl and 3'-hydroxyl groups in double-stranded DNA using NAD as a coenzyme and as the energy source for the reaction. It is essential for DNA replication and repair of damaged DNA. The protein is DNA ligase of Gluconobacter oxydans (strain 621H) (Gluconobacter suboxydans).